The following is a 381-amino-acid chain: Selenoprotein P (381 aa).

An N-terminal signal peptide occupies residues 1 to 19; that stretch reads MWRSLGLALALCLLPSGGT. Residue Asn46 is glycosylated (N-linked (GlcNAc...) asparagine). Position 59 (Sec59) is a non-standard amino acid, selenocysteine. Asn83 carries N-linked (GlcNAc...) (complex) asparagine glycosylation. 3 N-linked (GlcNAc...) asparagine glycosylation sites follow: Asn119, Asn128, and Asn174. The disordered stretch occupies residues 200–268; it reads TPSPHYHHEH…ENRDMPASED (69 aa). The segment covering 204 to 216 has biased composition (basic residues); it reads HYHHEHHHNHGHQ. A compositionally biased stretch (polar residues) spans 218-230; that stretch reads LGSSELSENQQPG. Positions 243–255 are enriched in basic residues; that stretch reads LHHHHKHKGQHRQ. A Phosphoserine modification is found at Ser266. Residues Sec300, Sec318, and Sec330 are each a non-standard amino acid (selenocysteine). N-linked (GlcNAc...) asparagine glycosylation occurs at Asn338. Non-standard amino acids (selenocysteine) are located at Sec345, Sec352, Sec367, Sec369, Sec376, and Sec378. The disordered stretch occupies residues 355 to 381; that stretch reads SQQLIPTEASASURUKNQAKKUEUPSN.

The protein belongs to the selenoprotein P family. Post-translationally, phosphorylation sites are present in the extracellular medium. Made in the liver and heart and secreted into the plasma. It is also found in the kidney.

It localises to the secreted. In terms of biological role, might be responsible for some of the extracellular antioxidant defense properties of selenium or might be involved in the transport of selenium. May supply selenium to tissues such as brain and testis. This is Selenoprotein P from Homo sapiens (Human).